The chain runs to 984 residues: Zinc finger and BTB domain-containing protein 4 (984 aa).

A BTB domain is found at cysteine 30–glycine 131. Residue lysine 40 forms a Glycyl lysine isopeptide (Lys-Gly) (interchain with G-Cter in SUMO2) linkage. 3 disordered regions span residues threonine 71–valine 104, methionine 172–phenylalanine 210, and threonine 227–leucine 262. The span at serine 74–serine 88 shows a compositional bias: low complexity. Residues valine 165–leucine 324 form an interaction with CBFA2T3 region. Residues phenylalanine 210–cysteine 232 form a C2H2-type 1; atypical zinc finger. Positions alanine 242–alanine 255 are enriched in gly residues. 3 C2H2-type zinc fingers span residues tyrosine 285 to histidine 307, tyrosine 313 to histidine 335, and tyrosine 341 to histidine 364. At serine 367 the chain carries Phosphoserine. The segment at glycine 461 to proline 575 is disordered. Over residues alanine 467–glycine 477 the composition is skewed to gly residues. Low complexity-rich tracts occupy residues serine 478–threonine 488 and alanine 507–threonine 529. Residue lysine 548 forms a Glycyl lysine isopeptide (Lys-Gly) (interchain with G-Cter in SUMO2) linkage. Gly residues predominate over residues glycine 552 to arginine 565. A Glycyl lysine isopeptide (Lys-Gly) (interchain with G-Cter in SUMO2) cross-link involves residue lysine 590. 5 disordered regions span residues isoleucine 593–arginine 696, arginine 713–threonine 734, glutamine 756–glycine 836, glycine 853–glycine 876, and glutamine 947–glycine 984. Acidic residues predominate over residues serine 604 to glutamate 627. Basic and acidic residues predominate over residues glutamate 628–leucine 637. 2 consecutive C2H2-type zinc fingers follow at residues histidine 697–histidine 719 and phenylalanine 736–histidine 758. Phosphothreonine; by HIPK2 occurs at positions 766 and 768. Positions alanine 807 to serine 819 are enriched in low complexity. Positions threonine 948 to proline 966 are enriched in pro residues. Threonine 955 is subject to Phosphothreonine; by HIPK2.

As to quaternary structure, interacts with HIPK2. Interacts with CBFA2T3. Interacts with ZBTB38. Post-translationally, phosphorylated by HIPK2. This phosphorylation reduces stability and triggers ZBTB4 protein degradation in response to DNA damage.

The protein resides in the nucleus. It is found in the chromosome. Functionally, transcriptional repressor with bimodal DNA-binding specificity. Represses transcription in a methyl-CpG-dependent manner. Binds with a higher affinity to methylated CpG dinucleotides in the consensus sequence 5'-CGCG-3' but can also bind to the non-methylated consensus sequence 5'-CTGCNA-3' also known as the consensus kaiso binding site (KBS). Can also bind specifically to a single methyl-CpG pair and can bind hemimethylated DNA but with a lower affinity compared to methylated DNA. Plays a role in postnatal myogenesis, may be involved in the regulation of satellite cells self-renewal. This Rattus norvegicus (Rat) protein is Zinc finger and BTB domain-containing protein 4 (Zbtb4).